Here is a 392-residue protein sequence, read N- to C-terminus: Cytochrome P450 monooxygenase ppzE (392 aa).

The helical transmembrane segment at 10–30 threads the bilayer; it reads LELVWFVALYPFACWTLFAVL. A glycan (N-linked (GlcNAc...) asparagine) is linked at N319. Position 353 (C353) interacts with heme. Residue N372 is glycosylated (N-linked (GlcNAc...) asparagine).

Belongs to the cytochrome P450 family. It depends on heme as a cofactor.

It localises to the membrane. It participates in secondary metabolite biosynthesis. In terms of biological role, cytochrome P450 monooxygenase; part of the gene cluster that mediates the biosynthesis of pyrrolopyrazines, secondary metabolites showing insecticidal activity. The role of ppzE within the pathway has still to be determined. The single multifunctional NRPS ppzA is sufficient to produce peramine via condensation of 1-pyrroline-5-carboxylate and arginine, N-methylation of the alpha-amino group of arginine and reduction of the thioester and the cyclization to form an iminium ion resulting in release from the peptide synthetase. Deprotonation of this intermediate and oxidation of the pyrroline ring would give rise to peramine. In Epichloe species that produce only peramine, the peramine synthetase gene is not localized in a gene cluster, in contrast to Metarhizium species that contain additional pyrrolopyrazine biosynthesis genes. The 2-oxoglutarate-Fe(II) type oxidoreductase ppzC hydroxylates peramine to yield the newly identified compound 8-hydroxyperamine whereas ppzD converts L-proline into trans-4-hydroxy-L-proline, a precursor of peramine biosynthesis. The sequence is that of Cytochrome P450 monooxygenase ppzE from Metarhizium rileyi (strain RCEF 4871) (Nomuraea rileyi).